Consider the following 36-residue polypeptide: Lambda-hexatoxin-Hv1a (36 aa).

4 disulfides stabilise this stretch: cysteine 3–cysteine 17, cysteine 10–cysteine 22, cysteine 13–cysteine 14, and cysteine 16–cysteine 33.

It belongs to the neurotoxin 11 (kappa toxin) family. In terms of tissue distribution, expressed by the venom gland.

It localises to the secreted. This excitatory toxin inhibits insect calcium-activated potassium (KCa) channels (Slo-type). The polypeptide is Lambda-hexatoxin-Hv1a (Hadronyche versuta (Blue mountains funnel-web spider)).